Here is a 254-residue protein sequence, read N- to C-terminus: uncharacterized protein (254 aa).

Belongs to the methyltransferase superfamily.

This is an uncharacterized protein from Mycobacterium bovis (strain ATCC BAA-935 / AF2122/97).